Here is a 227-residue protein sequence, read N- to C-terminus: Orotidine 5'-phosphate decarboxylase (227 aa).

Substrate contacts are provided by residues aspartate 8, lysine 30, 58–67 (DLKLYDIPNT), threonine 117, arginine 177, glutamine 186, glycine 206, and arginine 207. Lysine 60 serves as the catalytic Proton donor.

The protein belongs to the OMP decarboxylase family. Type 1 subfamily. As to quaternary structure, homodimer.

The enzyme catalyses orotidine 5'-phosphate + H(+) = UMP + CO2. It functions in the pathway pyrimidine metabolism; UMP biosynthesis via de novo pathway; UMP from orotate: step 2/2. In terms of biological role, catalyzes the decarboxylation of orotidine 5'-monophosphate (OMP) to uridine 5'-monophosphate (UMP). In Campylobacter lari (strain RM2100 / D67 / ATCC BAA-1060), this protein is Orotidine 5'-phosphate decarboxylase.